We begin with the raw amino-acid sequence, 333 residues long: Ketoreductase sphI (333 aa).

Residue tyrosine 167 coordinates NADP(+).

Belongs to the NAD(P)-dependent epimerase/dehydratase family. Dihydroflavonol-4-reductase subfamily.

In terms of biological role, ketoreductase; part of the gene cluster that mediates the biosynthesis of sphingofungins, bioactive molecules acting as sphingolipid inhibitors via inhibiting serine palmitoyl transferase (SPT). Does not seem to be involved in any biosynthetic process leading to the production of sphingofungins, but might be connected to a regulation or resistance mechanism. This chain is Ketoreductase sphI, found in Aspergillus fumigatus (strain CBS 144.89 / FGSC A1163 / CEA10) (Neosartorya fumigata).